Consider the following 170-residue polypeptide: MELKDYIATIENYPKEGVVFRDISPLMADGNAYNYAATEIVQYARDKEIDMVVGPEARGFIIGCPVAFALGVGFAPVRKPGKLPREVIEATYEKEYGTDTLTMHSDSIKPGQRVLIVDDLLATGGTIAATIELVEKMGGVVVGCAFLIELDELKGREKIGNYVYKVLMHY.

Belongs to the purine/pyrimidine phosphoribosyltransferase family. In terms of assembly, homodimer.

The protein resides in the cytoplasm. It carries out the reaction AMP + diphosphate = 5-phospho-alpha-D-ribose 1-diphosphate + adenine. It participates in purine metabolism; AMP biosynthesis via salvage pathway; AMP from adenine: step 1/1. Its function is as follows. Catalyzes a salvage reaction resulting in the formation of AMP, that is energically less costly than de novo synthesis. This is Adenine phosphoribosyltransferase from Lactococcus lactis subsp. cremoris (strain SK11).